A 275-amino-acid chain; its full sequence is F-box only protein 50 (275 aa).

A disordered region spans residues 1–67 (MEEVREGHAL…LPEPAQPSEA (67 aa)). The segment covering 26–62 (PPSPRSPSPPPSPPPLPSPPSLPSPAAPEAPELPEPA) has biased composition (pro residues). A phosphoserine mark is found at Ser-31, Ser-37, and Ser-49. Residues 95 to 273 (LLLRRPLYRN…VTDSSVSVQL (179 aa)) enclose the FBA domain.

As to expression, expressed in the esophagus, oral cavity, skin, tongue and reproductive organs.

The protein resides in the cytoplasm. Functionally, promotes cell proliferation. The protein is F-box only protein 50 (NCCRP1) of Homo sapiens (Human).